Here is a 199-residue protein sequence, read N- to C-terminus: Pyridoxine/pyridoxamine 5'-phosphate oxidase (199 aa).

FMN contacts are provided by residues 44–49 (RTVLLK), 59–60 (YT), K66, and Q91. Substrate is bound at residue K49. Residues Y109, R113, and S117 each coordinate substrate. FMN-binding positions include 126–127 (QS) and W171. Residue 177–179 (RLH) coordinates substrate. R181 provides a ligand contact to FMN.

It belongs to the pyridoxamine 5'-phosphate oxidase family. As to quaternary structure, homodimer. The cofactor is FMN.

It catalyses the reaction pyridoxamine 5'-phosphate + O2 + H2O = pyridoxal 5'-phosphate + H2O2 + NH4(+). It carries out the reaction pyridoxine 5'-phosphate + O2 = pyridoxal 5'-phosphate + H2O2. The protein operates within cofactor metabolism; pyridoxal 5'-phosphate salvage; pyridoxal 5'-phosphate from pyridoxamine 5'-phosphate: step 1/1. It functions in the pathway cofactor metabolism; pyridoxal 5'-phosphate salvage; pyridoxal 5'-phosphate from pyridoxine 5'-phosphate: step 1/1. Catalyzes the oxidation of either pyridoxine 5'-phosphate (PNP) or pyridoxamine 5'-phosphate (PMP) into pyridoxal 5'-phosphate (PLP). In Xanthomonas campestris pv. campestris (strain 8004), this protein is Pyridoxine/pyridoxamine 5'-phosphate oxidase.